A 215-amino-acid chain; its full sequence is Vesicle transport protein SFT2C (215 aa).

Over 1–82 the chain is Cytoplasmic; the sequence is MADLHRQLQE…RGQRLAAGGG (82 aa). Residues 83–103 traverse the membrane as a helical segment; it reads CLLLAALCFGLAALYAPVLLL. Residues 104 to 107 are Lumenal-facing; the sequence is RARK. Residues 108-128 form a helical membrane-spanning segment; it reads FALLWSLGSALALAGSALLRG. At 129–142 the chain is on the cytoplasmic side; the sequence is GAACGRLLRCEEAP. Residues 143–163 traverse the membrane as a helical segment; sequence SRPALLYMAALGATLFAALGL. Topologically, residues 164–166 are lumenal; that stretch reads RST. A helical transmembrane segment spans residues 167-187; sequence LLTVLGAGAQVAALLAALVGL. Residues 188–215 lie on the Cytoplasmic side of the membrane; the sequence is LPWGGGTALRLALGRLGRGAGLAKVLPV.

This sequence belongs to the SFT2 family.

It is found in the membrane. May be involved in fusion of retrograde transport vesicles derived from an endocytic compartment with the Golgi complex. The protein is Vesicle transport protein SFT2C of Homo sapiens (Human).